The chain runs to 228 residues: Urease accessory protein UreF (228 aa).

Belongs to the UreF family. In terms of assembly, ureD, UreF and UreG form a complex that acts as a GTP-hydrolysis-dependent molecular chaperone, activating the urease apoprotein by helping to assemble the nickel containing metallocenter of UreC. The UreE protein probably delivers the nickel.

It is found in the cytoplasm. Functionally, required for maturation of urease via the functional incorporation of the urease nickel metallocenter. This Yersinia enterocolitica serotype O:8 / biotype 1B (strain NCTC 13174 / 8081) protein is Urease accessory protein UreF.